The primary structure comprises 364 residues: Aminomethyltransferase (364 aa).

It belongs to the GcvT family. As to quaternary structure, the glycine cleavage system is composed of four proteins: P, T, L and H.

It catalyses the reaction N(6)-[(R)-S(8)-aminomethyldihydrolipoyl]-L-lysyl-[protein] + (6S)-5,6,7,8-tetrahydrofolate = N(6)-[(R)-dihydrolipoyl]-L-lysyl-[protein] + (6R)-5,10-methylene-5,6,7,8-tetrahydrofolate + NH4(+). Its function is as follows. The glycine cleavage system catalyzes the degradation of glycine. The protein is Aminomethyltransferase of Bacillus licheniformis (strain ATCC 14580 / DSM 13 / JCM 2505 / CCUG 7422 / NBRC 12200 / NCIMB 9375 / NCTC 10341 / NRRL NRS-1264 / Gibson 46).